The chain runs to 291 residues: Nucleotide-binding protein Athe_0320 (291 aa).

9 to 16 serves as a coordination point for ATP; the sequence is GMSGAGKS. 60-63 provides a ligand contact to GTP; it reads DIRG.

It belongs to the RapZ-like family.

Functionally, displays ATPase and GTPase activities. This chain is Nucleotide-binding protein Athe_0320, found in Caldicellulosiruptor bescii (strain ATCC BAA-1888 / DSM 6725 / KCTC 15123 / Z-1320) (Anaerocellum thermophilum).